The primary structure comprises 245 residues: 1-(5-phosphoribosyl)-5-[(5-phosphoribosylamino)methylideneamino] imidazole-4-carboxamide isomerase (245 aa).

The active-site Proton acceptor is Asp7. Catalysis depends on Asp129, which acts as the Proton donor.

Belongs to the HisA/HisF family.

The protein resides in the cytoplasm. The catalysed reaction is 1-(5-phospho-beta-D-ribosyl)-5-[(5-phospho-beta-D-ribosylamino)methylideneamino]imidazole-4-carboxamide = 5-[(5-phospho-1-deoxy-D-ribulos-1-ylimino)methylamino]-1-(5-phospho-beta-D-ribosyl)imidazole-4-carboxamide. The protein operates within amino-acid biosynthesis; L-histidine biosynthesis; L-histidine from 5-phospho-alpha-D-ribose 1-diphosphate: step 4/9. The polypeptide is 1-(5-phosphoribosyl)-5-[(5-phosphoribosylamino)methylideneamino] imidazole-4-carboxamide isomerase (Shewanella sp. (strain W3-18-1)).